Consider the following 597-residue polypeptide: Aspartate--tRNA(Asp/Asn) ligase (597 aa).

E176 contributes to the L-aspartate binding site. The segment at 200–203 (QQFK) is aspartate. Positions 222 and 451 each coordinate L-aspartate. 222 to 224 (RDE) is an ATP binding site. ATP is bound at residue E489. Residue R496 participates in L-aspartate binding. 541 to 544 (GIDR) contributes to the ATP binding site.

This sequence belongs to the class-II aminoacyl-tRNA synthetase family. Type 1 subfamily. As to quaternary structure, homodimer.

It localises to the cytoplasm. It carries out the reaction tRNA(Asx) + L-aspartate + ATP = L-aspartyl-tRNA(Asx) + AMP + diphosphate. Its function is as follows. Aspartyl-tRNA synthetase with relaxed tRNA specificity since it is able to aspartylate not only its cognate tRNA(Asp) but also tRNA(Asn). Reaction proceeds in two steps: L-aspartate is first activated by ATP to form Asp-AMP and then transferred to the acceptor end of tRNA(Asp/Asn). The protein is Aspartate--tRNA(Asp/Asn) ligase of Orientia tsutsugamushi (strain Boryong) (Rickettsia tsutsugamushi).